Reading from the N-terminus, the 455-residue chain is Tyramine receptor Ser-2 (455 aa).

Residues 1–60 (MFRNYTDSVQEMVLRAIDSIRDSVINASSAVSTTTLPPLDIPMTSMKPPSIIPTVELVLG) lie on the Extracellular side of the membrane. N-linked (GlcNAc...) asparagine glycosylation is found at Asn-4 and Asn-26. The helical transmembrane segment at 61–83 (TITYLVIIAMTVVGNTLVVVAVF) threads the bilayer. The Cytoplasmic portion of the chain corresponds to 84 to 93 (SYRPLKKVQN). A helical transmembrane segment spans residues 94–115 (YFLVSLAASDLAVAIFVMPLHV). The Extracellular segment spans residues 116-133 (VTFLAGGKWLLGVTVCQF). The cysteines at positions 131 and 209 are disulfide-linked. The helical transmembrane segment at 134 to 154 (FTTADILLCTSSILNLCAIAL) threads the bilayer. The Cytoplasmic portion of the chain corresponds to 155–174 (DRYWAIHNPINYAQKRTTKF). A helical transmembrane segment spans residues 175-197 (VCIVIVIVWILSMLISVPPIIGW). Residues 198–221 (NNWQENMMEDSCGLSTEKAFVVFS) lie on the Extracellular side of the membrane. A helical transmembrane segment spans residues 222–243 (AAGSFFLPLLVMVVVYVKIFIS). Residues 244–370 (ARQRIRTNRG…VAKEKRAAKT (127 aa)) are Cytoplasmic-facing. A helical membrane pass occupies residues 371–392 (IAVIIFVFSFCWLPFFVAYVIR). The Extracellular segment spans residues 393 to 407 (PFCETCKLHAKVEQA). The chain crosses the membrane as a helical span at residues 408–428 (FTWLGYINSSLNPFLYGILNL). Residues 429–455 (EFRRAFKKILCPKAVLEQRRRRMSAQP) lie on the Cytoplasmic side of the membrane.

This sequence belongs to the G-protein coupled receptor 1 family. As to expression, the different isoforms are expressed in specific, but overlapping sets of sensory, inter- and motor neurons, including AIY, AIZ and RIA interneurons. They are also expressed in pharyngeal cells, head muscles and excretory gland cells.

It localises to the cell membrane. Functionally, G-protein coupled receptor for tyramine, a known neurotransmitter and neuromodulator and direct precursor of octopamine. The rank order of potency is tyramine &gt; octopamine &gt; dopamine &gt; serotonin &gt; epinephrine = norepinephrine. This chain is Tyramine receptor Ser-2 (ser-2), found in Caenorhabditis elegans.